Here is a 78-residue protein sequence, read N- to C-terminus: UPF0349 protein BLi03401/BL03152 (78 aa).

The protein belongs to the UPF0349 family.

In Bacillus licheniformis (strain ATCC 14580 / DSM 13 / JCM 2505 / CCUG 7422 / NBRC 12200 / NCIMB 9375 / NCTC 10341 / NRRL NRS-1264 / Gibson 46), this protein is UPF0349 protein BLi03401/BL03152.